The primary structure comprises 414 residues: Adenylosuccinate synthetase (414 aa).

Residues 12–18 and 40–42 each bind GTP; these read GDEGKGK and GHT. The active-site Proton acceptor is the D13. D13 and G40 together coordinate Mg(2+). Residues 13–16, 38–41, T124, R138, Q216, T231, and R297 contribute to the IMP site; these read DEGK and NAGH. H41 serves as the catalytic Proton donor. Residue 293–299 participates in substrate binding; that stretch reads STTGRPR. Residues R299, 325–327, and 403–405 contribute to the GTP site; these read KLD and STG.

Belongs to the adenylosuccinate synthetase family. In terms of assembly, homodimer. Mg(2+) is required as a cofactor.

It localises to the cytoplasm. It carries out the reaction IMP + L-aspartate + GTP = N(6)-(1,2-dicarboxyethyl)-AMP + GDP + phosphate + 2 H(+). Its pathway is purine metabolism; AMP biosynthesis via de novo pathway; AMP from IMP: step 1/2. Plays an important role in the de novo pathway of purine nucleotide biosynthesis. Catalyzes the first committed step in the biosynthesis of AMP from IMP. The chain is Adenylosuccinate synthetase from Hydrogenobaculum sp. (strain Y04AAS1).